We begin with the raw amino-acid sequence, 469 residues long: MIHKPIPNSKPLTAYIDGLRGLLSIIIFNAHLTPVIILGYDKVSRSQVSTSPRNVLDIPLVASCVNNWVLFTIPILKLVYSASPAVCLFFAISGYVMSLKWVRYMNHRSQTSEINSARIFTDFGSSIFRRTLRLSLLAMASMIVPFALMKTGFFDRTVVQQHGLTKLERGMRFWLEQWEQFPARHESWWEQTCDLVQNCARIFTVFMQRRDEAFSPRYNPVLWTIKADLRASLALTVTHLALLGTKRSSRLQILAALAVLGVAVGSLECPLFWAGWIIAEIHHAAEQTPLAQGKGTGQPRQKTNTAGMDTFGKTVVLALGCYVASYPTWKPEKAPMFNTFHMMTPGLIVPPRTWHSLGAVLVLYSLRDVPLARRICESSVAQFLGTHSFAIYLIHFCLVISFGPDLFSWVWSRTGHENLQSLAVGFGITYSILFMAVLLTAAIFRRFIESPVNKCVDSLYRSASVRKEA.

A run of 7 helical transmembrane segments spans residues 21–41 (GLLSIIIFNAHLTPVIILGYD), 70–90 (LFTIPILKLVYSASPAVCLFF), 134–154 (LSLLAMASMIVPFALMKTGFF), 253–273 (ILAALAVLGVAVGSLECPLFW), 346–366 (GLIVPPRTWHSLGAVLVLYSL), 391–411 (IYLIHFCLVISFGPDLFSWVW), and 424–444 (VGFGITYSILFMAVLLTAAIF).

It belongs to the acyltransferase 3 family.

It is found in the membrane. It functions in the pathway secondary metabolite biosynthesis. Acyltransferase; part of the gene cluster that mediates the biosynthesis of squalestatin S1 (SQS1, also known as zaragozic acid A), a heavily oxidized fungal polyketide that offers potent cholesterol lowering activity by targeting squalene synthase (SS). SQS1 is composed of a 2,8-dioxobicyclic[3.2.1]octane-3,4,5-tricarboxyclic acid core that is connected to two lipophilic polyketide arms. These initial steps feature the priming of an unusual benzoic acid starter unit onto the highly reducing polyketide synthase clz14, followed by oxaloacetate extension and product release to generate a tricarboxylic acid containing product. The phenylalanine ammonia lyase (PAL) clz10 and the acyl-CoA ligase clz12 are involved in transforming phenylalanine into benzoyl-CoA. The citrate synthase-like protein clz17 is involved in connecting the C-alpha-carbons of the hexaketide chain and oxaloacetate to afford the tricarboxylic acid unit. The potential hydrolytic enzymes, clz11 and clz13, are in close proximity to pks2 and may participate in product release. On the other side, the tetraketide arm is synthesized by a the squalestatin tetraketide synthase clz2 and enzymatically esterified to the core in the last biosynthetic step, by the acetyltransferase clz6. The biosynthesis of the tetraketide must involve 3 rounds of chain extension. After the first and second rounds methyl-transfer occurs, and in all rounds of extension the ketoreductase and dehydratase are active. The enoyl reductase and C-MeT of clz2 are not active in the final round of extension. The acetyltransferase clz6 appears to have a broad substrate selectivity for its acyl CoA substrate, allowing the in vitro synthesis of novel squalestatins. The biosynthesis of SQS1 requires several oxidative steps likely performed by oxidoreductases clz3, clz15 and clz16. Finally, in support of the identification of the cluster as being responsible for SQS1 production, the cluster contains a gene encoding a putative squalene synthase (SS) clz20, suggesting a likely mechanism for self-resistance. In Cochliobolus lunatus (Filamentous fungus), this protein is Acyltransferase clz18.